The following is a 1680-amino-acid chain: Alpha-protein kinase 3 (1680 aa).

The tract at residues 1-37 (MGSRRAAGRGWGLGGRAGAGGDSEDDGPVWTPGPASR) is disordered. Gly residues predominate over residues 9–21 (RGWGLGGRAGAGG). Residues 77 to 173 (PLFETTLKSR…SGVLEVGTMT (97 aa)) form the Ig-like 1 domain. Ser-229 is subject to Phosphoserine. Disordered regions lie at residues 237–288 (STPV…NGED), 302–759 (ELGP…CPRE), 785–950 (SEEA…GTRS), 1078–1128 (EGSA…LTGL), and 1147–1244 (PKVR…QRKA). Residues 320-337 (KDEESKPGEQKLELEKAE) show a composition bias toward basic and acidic residues. The segment covering 339–353 (SQCSSENVVPSTDKP) has biased composition (polar residues). A compositionally biased stretch (pro residues) spans 402 to 426 (APAPAPVPAPALAPAPVPVPAPTPV). Positions 514–532 (ESTTTSLSSQTSESMAQSL) are enriched in low complexity. 2 stretches are compositionally biased toward polar residues: residues 557–566 (SPLQGQTSHK) and 731–744 (ETQS…SLSS). Residues 785–796 (SEEAAFRSHEDG) show a composition bias toward basic and acidic residues. A compositionally biased stretch (polar residues) spans 917–932 (SPTQSHPPEAMATSSE). Basic and acidic residues-rich tracts occupy residues 1087 to 1111 (ERTS…ESRT) and 1151 to 1165 (AGSD…ERES). Residue Ser-1199 is modified to Phosphoserine. Positions 1231–1244 (DEGKQEALAKQRKA) are enriched in basic and acidic residues. One can recognise an Ig-like 2 domain in the interval 1251 to 1339 (PQVIRKIRVE…GSASTDFCLS (89 aa)). The cysteines at positions 1273 and 1323 are disulfide-linked. Positions 1367–1600 (KGLADSGCWG…YCDMLGLKPL (234 aa)) constitute an Alpha-type protein kinase domain. Residues 1603–1680 (PEAAHPQAKA…DGSSKAQSMR (78 aa)) form a disordered region. Polar residues-rich tracts occupy residues 1639-1660 (PQGS…QAAT) and 1671-1680 (DGSSKAQSMR).

The protein belongs to the protein kinase superfamily. Alpha-type protein kinase family. ALPK subfamily. As to expression, expressed in the heart and skeletal muscle of adult mice.

The protein localises to the nucleus. The enzyme catalyses L-seryl-[protein] + ATP = O-phospho-L-seryl-[protein] + ADP + H(+). It catalyses the reaction L-threonyl-[protein] + ATP = O-phospho-L-threonyl-[protein] + ADP + H(+). In terms of biological role, involved in cardiomyocyte differentiation. The chain is Alpha-protein kinase 3 from Mus musculus (Mouse).